The sequence spans 453 residues: Keratin, type I cytoskeletal 15 (453 aa).

The head stretch occupies residues Met1 to Asn102. Phosphoserine is present on residues Ser16, Ser17, Ser34, Ser48, and Ser56. A coil 1A region spans residues Glu103–Trp138. One can recognise an IF rod domain in the interval Glu103–Met415. The linker 1 stretch occupies residues Tyr139–Thr157. Residues Thr158–Phe249 are coil 1B. A linker 12 region spans residues Ser250–Leu269. Residues Thr270 to Gln411 form a coil 2 region. A Glycyl lysine isopeptide (Lys-Gly) (interchain with G-Cter in SUMO2) cross-link involves residue Lys298. Phosphothreonine occurs at positions 299 and 321. The tract at residues Asp412–Ile453 is tail. A Glycyl lysine isopeptide (Lys-Gly) (interchain with G-Cter in SUMO1); alternate cross-link involves residue Lys444. Lys444 participates in a covalent cross-link: Glycyl lysine isopeptide (Lys-Gly) (interchain with G-Cter in SUMO2); alternate.

It belongs to the intermediate filament family. As to quaternary structure, heterotetramer of two type I and two type II keratins. Interacts with NOD2. As to expression, expressed in the basal cell layers of several stratified epithelia including esophagus, tongue, stomach, epidermis and hair follicle. In the hair follicle, expression is detected mainly in the basal layer of the outer root sheath (ORS), except just above the follicle bulb where it occurs throughout its thickness. Low expression levels are seen in the single layer of ORS cells around the base of the follicle which increases in the palisade-like cells of the bulb. Also expressed in the basal cells of the sebaceous glands, and expression in the epidermis occurs in a punctate pattern.

The sequence is that of Keratin, type I cytoskeletal 15 from Ovis aries (Sheep).